Reading from the N-terminus, the 173-residue chain is Alpha-crystallin A chain (173 aa).

N-acetylmethionine is present on Met-1. The interval Met-1–Glu-63 is required for complex formation with BFSP1 and BFSP2. At Gln-6 the chain carries Deamidated glutamine; partial. Residue Ser-45 is modified to Phosphoserine. Gln-50 carries the deamidated glutamine; partial modification. In terms of domain architecture, sHSP spans Leu-52 to Ser-162. Lys-99 bears the N6-acetyllysine mark. His-100 provides a ligand contact to Zn(2+). Asn-101 is modified (deamidated asparagine; partial). Zn(2+) is bound by residues Glu-102 and His-107. Position 122 is a phosphoserine (Ser-122). Asn-123 is modified (deamidated asparagine; partial). A disulfide bridge connects residues Cys-131 and Cys-142. The residue at position 147 (Gln-147) is a Deamidated glutamine; partial. The disordered stretch occupies residues Gln-147–Ser-173. The span at Ser-153 to Pro-167 shows a compositional bias: basic and acidic residues. A Zn(2+)-binding site is contributed by His-154. O-linked (GlcNAc) serine glycosylation is present at Ser-162.

It belongs to the small heat shock protein (HSP20) family. In terms of assembly, heteromer composed of three CRYAA and one CRYAB subunits. Inter-subunit bridging via zinc ions enhances stability, which is crucial as there is no protein turn over in the lens. Can also form homodimers and homotetramers (dimers of dimers) which serve as the building blocks of homooligomers. Within homooligomers, the zinc-binding motif is created from residues of 3 different molecules. His-100 and Glu-102 from one molecule are ligands of the zinc ion, and His-107 and His-154 residues from additional molecules complete the site with tetrahedral coordination geometry. Part of a complex required for lens intermediate filament formation composed of BFSP1, BFSP2 and CRYAA. Undergoes age-dependent proteolytical cleavage at the C-terminus.

The protein localises to the cytoplasm. Its subcellular location is the nucleus. Contributes to the transparency and refractive index of the lens. In its oxidized form (absence of intramolecular disulfide bond), acts as a chaperone, preventing aggregation of various proteins under a wide range of stress conditions. Required for the correct formation of lens intermediate filaments as part of a complex composed of BFSP1, BFSP2 and CRYAA. The chain is Alpha-crystallin A chain (CRYAA) from Procavia capensis (Rock hyrax).